We begin with the raw amino-acid sequence, 474 residues long: Bifunctional protein HldE (474 aa).

The tract at residues 1-318 (MKLSMPRFDQ…RAIQREEGSE (318 aa)) is ribokinase. ATP is bound at residue 194–197 (NLSE). Aspartate 263 is an active-site residue. The interval 343 to 474 (FTNGCFDILH…AIVEKIRKSE (132 aa)) is cytidylyltransferase.

In the N-terminal section; belongs to the carbohydrate kinase PfkB family. The protein in the C-terminal section; belongs to the cytidylyltransferase family. As to quaternary structure, homodimer.

The catalysed reaction is D-glycero-beta-D-manno-heptose 7-phosphate + ATP = D-glycero-beta-D-manno-heptose 1,7-bisphosphate + ADP + H(+). It catalyses the reaction D-glycero-beta-D-manno-heptose 1-phosphate + ATP + H(+) = ADP-D-glycero-beta-D-manno-heptose + diphosphate. Its pathway is nucleotide-sugar biosynthesis; ADP-L-glycero-beta-D-manno-heptose biosynthesis; ADP-L-glycero-beta-D-manno-heptose from D-glycero-beta-D-manno-heptose 7-phosphate: step 1/4. The protein operates within nucleotide-sugar biosynthesis; ADP-L-glycero-beta-D-manno-heptose biosynthesis; ADP-L-glycero-beta-D-manno-heptose from D-glycero-beta-D-manno-heptose 7-phosphate: step 3/4. Its function is as follows. Catalyzes the phosphorylation of D-glycero-D-manno-heptose 7-phosphate at the C-1 position to selectively form D-glycero-beta-D-manno-heptose-1,7-bisphosphate. Catalyzes the ADP transfer from ATP to D-glycero-beta-D-manno-heptose 1-phosphate, yielding ADP-D-glycero-beta-D-manno-heptose. In Pseudomonas fluorescens (strain Pf0-1), this protein is Bifunctional protein HldE.